The following is a 948-amino-acid chain: Non-lysosomal glucosylceramidase (948 aa).

Over 1–736 the chain is Extracellular; that stretch reads MAEPLAVETK…VMDGPSAYCS (736 aa). Over residues 177-195 the composition is skewed to basic and acidic residues; the sequence is STRDKTSDPDGDPDGERTK. The segment at 177-197 is disordered; sequence STRDKTSDPDGDPDGERTKCQ. Residue asparagine 200 is glycosylated (N-linked (GlcNAc...) asparagine). Serine 214 carries the phosphoserine modification. N-linked (GlcNAc...) asparagine glycans are attached at residues asparagine 288, asparagine 555, and asparagine 629. Phosphoserine is present on residues serine 667 and serine 669. A glycan (N-linked (GlcNAc...) asparagine) is linked at asparagine 673. A helical transmembrane segment spans residues 737-753; it reads GLWLAALQAMSAMATIL. Residues 754-948 lie on the Cytoplasmic side of the membrane; sequence DQPNDCLRYQ…ALERRRAQRD (195 aa).

The protein belongs to the non-lysosomal glucosylceramidase family.

Its subcellular location is the cell membrane. It carries out the reaction a beta-D-glucosyl-(1&lt;-&gt;1')-N-acylsphing-4-enine + H2O = an N-acylsphing-4-enine + D-glucose. Functionally, non-lysosomal glucosylceramidase that catalyzes the conversion of glucosylceramide to free glucose and ceramide. The sequence is that of Non-lysosomal glucosylceramidase from Drosophila melanogaster (Fruit fly).